The following is a 169-amino-acid chain: Cell division inhibitor SulA (169 aa).

The interval 106-112 (ALRTGNY) is ftsZ binding. The segment at 162–169 (KIHSNLYH) is lon protease binding.

Belongs to the SulA family. As to quaternary structure, interacts with FtsZ. Post-translationally, is rapidly cleaved and degraded by the Lon protease once DNA damage is repaired.

Its function is as follows. Component of the SOS system and an inhibitor of cell division. Accumulation of SulA causes rapid cessation of cell division and the appearance of long, non-septate filaments. In the presence of GTP, binds a polymerization-competent form of FtsZ in a 1:1 ratio, thus inhibiting FtsZ polymerization and therefore preventing it from participating in the assembly of the Z ring. This mechanism prevents the premature segregation of damaged DNA to daughter cells during cell division. The polypeptide is Cell division inhibitor SulA (Shigella boydii serotype 4 (strain Sb227)).